The following is a 1294-amino-acid chain: Disease resistance protein L6 (1294 aa).

The signal sequence occupies residues 1–29 (MSYLREVATAVALLLPFILLNKFWRPNSK). Residues 34–54 (NDDDDSTSEVDAISDSTNPSG) are disordered. Residues 59 to 221 (VEYEVFLSFR…AIADKVSADI (163 aa)) form the TIR domain. NAD(+) contacts are provided by residues 68 to 73 (RGPDTR) and G101. E135 is an active-site residue. The 240-residue stretch at 241–480 (DDHITAVLEK…VYDRLKISYD (240 aa)) folds into the NB-ARC domain. LRR repeat units lie at residues 246 to 268 (AVLEKLSLDSENVTMVGLYGMGG), 468 to 492 (LDEVYDRLKISYDALNPEAKEIFLD), 604 to 625 (LSELRYLHAREAMLTGDFNNLL), 626 to 650 (PNLKWLELPFYKHGEDDPPLTNYTM), 904 to 928 (LENLTSLEVNDIFQTLGGDLDGLQG), 1012 to 1039 (FPMLKKLDLAVANITKEEDLDAIGSLEE), 1063 to 1085 (LQKLTTLVVKVPSLREIEGLEEL), 1086 to 1109 (KSLQDLYLEGCTSLGRLPLEKLKE), 1179 to 1203 (LEELDSLELTLDDTCSSIERISFLS), 1205 to 1229 (LQKLTTLIVEVPSLREIEGLAELKS), and 1254 to 1278 (LKNLNVLDIQGCKSLSVDHLSALKT).

It belongs to the disease resistance TIR-NB-LRR family. Homooligomer; homooligomerization is required for activity.

The enzyme catalyses NAD(+) + H2O = ADP-D-ribose + nicotinamide + H(+). The catalysed reaction is NADP(+) + H2O = ADP-D-ribose 2'-phosphate + nicotinamide + H(+). It catalyses the reaction NAD(+) = 2'cADPR + nicotinamide + H(+). TIR-NB-LRR receptor-like protein that confers resistance to the flax rust phytopathogenic fungus (M.lini). An NAD(+) hydrolase (NADase): in response to activation, catalyzes cleavage of NAD(+) into ADP-D-ribose (ADPR) and nicotinamide; NAD(+) cleavage triggering a defense system that promotes cell death. Also able to hydrolyze NADP(+), but not other NAD(+)-related molecules. Makes small amounts of 2' cyclic ADPR (2'cADPR). The polypeptide is Disease resistance protein L6 (Linum usitatissimum (Flax)).